The chain runs to 353 residues: Uroporphyrinogen decarboxylase (353 aa).

Residues Arg30–Arg34, Asp79, Tyr154, Ser209, and His332 each bind substrate.

This sequence belongs to the uroporphyrinogen decarboxylase family. In terms of assembly, homodimer.

Its subcellular location is the cytoplasm. It carries out the reaction uroporphyrinogen III + 4 H(+) = coproporphyrinogen III + 4 CO2. Its pathway is porphyrin-containing compound metabolism; protoporphyrin-IX biosynthesis; coproporphyrinogen-III from 5-aminolevulinate: step 4/4. In terms of biological role, catalyzes the decarboxylation of four acetate groups of uroporphyrinogen-III to yield coproporphyrinogen-III. The chain is Uroporphyrinogen decarboxylase from Mycobacterium ulcerans (strain Agy99).